Reading from the N-terminus, the 161-residue chain is Capsid protein (161 aa).

This sequence belongs to the virgaviridae capsid protein family.

It is found in the virion. Functionally, capsid protein self-assembles to form rod-shaped virions about 18 nm in diameter with a central canal enclosing the viral genomic RNA. In Capsicum annuum (Capsicum pepper), this protein is Capsid protein (CP).